The following is a 119-amino-acid chain: Large ribosomal subunit protein bL20 (119 aa).

The protein belongs to the bacterial ribosomal protein bL20 family.

Functionally, binds directly to 23S ribosomal RNA and is necessary for the in vitro assembly process of the 50S ribosomal subunit. It is not involved in the protein synthesizing functions of that subunit. The protein is Large ribosomal subunit protein bL20 of Clostridium novyi (strain NT).